A 302-amino-acid polypeptide reads, in one-letter code: Oxygen-dependent coproporphyrinogen-III oxidase (302 aa).

Ser94 is a substrate binding site. A divalent metal cation is bound by residues His98 and His108. The active-site Proton donor is His108. 110 to 112 (NVR) is a substrate binding site. Positions 147 and 177 each coordinate a divalent metal cation. The important for dimerization stretch occupies residues 242–277 (YVEFNLVYDRGTLFGLQTGGRTESILMSMPPLVRWQ). 260–262 (GGR) provides a ligand contact to substrate.

Belongs to the aerobic coproporphyrinogen-III oxidase family. As to quaternary structure, homodimer. Requires a divalent metal cation as cofactor.

It localises to the cytoplasm. The enzyme catalyses coproporphyrinogen III + O2 + 2 H(+) = protoporphyrinogen IX + 2 CO2 + 2 H2O. The protein operates within porphyrin-containing compound metabolism; protoporphyrin-IX biosynthesis; protoporphyrinogen-IX from coproporphyrinogen-III (O2 route): step 1/1. Functionally, involved in the heme biosynthesis. Catalyzes the aerobic oxidative decarboxylation of propionate groups of rings A and B of coproporphyrinogen-III to yield the vinyl groups in protoporphyrinogen-IX. The sequence is that of Oxygen-dependent coproporphyrinogen-III oxidase from Shewanella baltica (strain OS155 / ATCC BAA-1091).